Reading from the N-terminus, the 153-residue chain is Regulatory protein RecX (153 aa).

The protein belongs to the RecX family.

It is found in the cytoplasm. In terms of biological role, modulates RecA activity. The protein is Regulatory protein RecX of Neisseria meningitidis serogroup C / serotype 2a (strain ATCC 700532 / DSM 15464 / FAM18).